The following is a 2144-amino-acid chain: HEAT repeat-containing protein 1 (2144 aa).

Met1 is modified (N-acetylmethionine). The residue at position 2 (Thr2) is an N-acetylthreonine; in HEAT repeat-containing protein 1, N-terminally processed. Ser516 is modified (phosphoserine). An HEAT 1 repeat occupies 913-951; it reads ASISSPVVTSLLINLGSPVKEVRRAAIQCLQALSGVASP. Residues 1170-1191 are disordered; that stretch reads KAKPLGTVQQKRRQKMQQKKSQ. Ser1190 bears the Phosphoserine mark. The HEAT 2 repeat unit spans residues 1347–1385; that stretch reads NKTVKMVIPALIQSDSGDSIEVSRNVEEIVVKIISVFVD. The residue at position 1492 (Ser1492) is a Phosphoserine. HEAT repeat units follow at residues 1594 to 1632, 1730 to 1770, and 2100 to 2138; these read LLPT…QNIS, IPQL…VVET, and IVLL…VLGE.

Belongs to the HEATR1/UTP10 family. Part of the small subunit (SSU) processome, composed of more than 70 proteins and the RNA chaperone small nucleolar RNA (snoRNA) U3. Interacts with MYC; the interaction is required for localization of MYC to the nucleolus.

The protein localises to the nucleus. The protein resides in the nucleolus. Its function is as follows. Ribosome biogenesis factor; required for recruitment of Myc to nucleoli. Involved in nucleolar processing of pre-18S ribosomal RNA. Required for optimal pre-ribosomal RNA transcription by RNA polymerase I. Part of the small subunit (SSU) processome, first precursor of the small eukaryotic ribosomal subunit. During the assembly of the SSU processome in the nucleolus, many ribosome biogenesis factors, an RNA chaperone and ribosomal proteins associate with the nascent pre-rRNA and work in concert to generate RNA folding, modifications, rearrangements and cleavage as well as targeted degradation of pre-ribosomal RNA by the RNA exosome. Involved in neuronal-lineage cell proliferation. In Homo sapiens (Human), this protein is HEAT repeat-containing protein 1.